Consider the following 328-residue polypeptide: uncharacterized protein (328 aa).

The G-patch domain occupies 10 to 55 (KMGFGHAMLLKMGWKGKGLGVEEDGRTEIIVNKKKQDKVGVGASIS). A disordered region spans residues 97-291 (EKITFKRTIK…KKSFSVSKTR (195 aa)). Over residues 101 to 110 (FKRTIKKNSK) the composition is skewed to basic residues. Over residues 116–126 (SDSDSDSDSES) the composition is skewed to acidic residues. Low complexity-rich tracts occupy residues 141 to 158 (DSDS…SSSS) and 210 to 240 (SSSS…SSSE). Positions 248–257 (KNKNKNKNKK) are enriched in basic residues.

This is an uncharacterized protein from Dictyostelium discoideum (Social amoeba).